The sequence spans 156 residues: 6,7-dimethyl-8-ribityllumazine synthase (156 aa).

5-amino-6-(D-ribitylamino)uracil contacts are provided by residues phenylalanine 22, alanine 57 to glutamate 59, and threonine 81 to isoleucine 83. A (2S)-2-hydroxy-3-oxobutyl phosphate-binding site is contributed by glycine 86–threonine 87. Histidine 89 acts as the Proton donor in catalysis. Position 114 (phenylalanine 114) interacts with 5-amino-6-(D-ribitylamino)uracil. Arginine 128 lines the (2S)-2-hydroxy-3-oxobutyl phosphate pocket.

It belongs to the DMRL synthase family. Forms an icosahedral capsid composed of 60 subunits, arranged as a dodecamer of pentamers.

It catalyses the reaction (2S)-2-hydroxy-3-oxobutyl phosphate + 5-amino-6-(D-ribitylamino)uracil = 6,7-dimethyl-8-(1-D-ribityl)lumazine + phosphate + 2 H2O + H(+). The protein operates within cofactor biosynthesis; riboflavin biosynthesis; riboflavin from 2-hydroxy-3-oxobutyl phosphate and 5-amino-6-(D-ribitylamino)uracil: step 1/2. Functionally, catalyzes the formation of 6,7-dimethyl-8-ribityllumazine by condensation of 5-amino-6-(D-ribitylamino)uracil with 3,4-dihydroxy-2-butanone 4-phosphate. This is the penultimate step in the biosynthesis of riboflavin. In Citrobacter koseri (strain ATCC BAA-895 / CDC 4225-83 / SGSC4696), this protein is 6,7-dimethyl-8-ribityllumazine synthase.